Reading from the N-terminus, the 711-residue chain is DNA ligase (711 aa).

Residues 39–43 (DAEYD), 88–89 (SL), and Glu-119 each bind NAD(+). The active-site N6-AMP-lysine intermediate is the Lys-121. Residues Arg-142, Glu-179, Lys-295, and Lys-319 each coordinate NAD(+). Positions 416, 419, 434, and 440 each coordinate Zn(2+). Positions 630–711 (ESVSSLAGRA…LRELLAGAGA (82 aa)) constitute a BRCT domain.

The protein belongs to the NAD-dependent DNA ligase family. LigA subfamily. Mg(2+) is required as a cofactor. Requires Mn(2+) as cofactor.

It carries out the reaction NAD(+) + (deoxyribonucleotide)n-3'-hydroxyl + 5'-phospho-(deoxyribonucleotide)m = (deoxyribonucleotide)n+m + AMP + beta-nicotinamide D-nucleotide.. Its function is as follows. DNA ligase that catalyzes the formation of phosphodiester linkages between 5'-phosphoryl and 3'-hydroxyl groups in double-stranded DNA using NAD as a coenzyme and as the energy source for the reaction. It is essential for DNA replication and repair of damaged DNA. The sequence is that of DNA ligase from Halorhodospira halophila (strain DSM 244 / SL1) (Ectothiorhodospira halophila (strain DSM 244 / SL1)).